The primary structure comprises 362 residues: Serine/threonine-protein kinase-like protein At3g51990 (362 aa).

The signal sequence occupies residues 1 to 24; the sequence is MGYLSCKAGSAVAIAVSSAASTSG. Residues 21–32 are compositionally biased toward low complexity; it reads STSGSTSSKASA. The tract at residues 21–43 is disordered; it reads STSGSTSSKASAPPESPIEDRPR. The Protein kinase domain occupies 59–329; it reads FDINNLLGRG…PGMEEVVGWL (271 aa). Residues 65–73 and Lys86 each bind ATP; that span reads LGRGSHGSV. Residue Asn136 is glycosylated (N-linked (GlcNAc...) asparagine). Asp185 (proton acceptor) is an active-site residue. Ser219 is modified (phosphoserine). A phosphothreonine mark is found at Thr220 and Thr225. At Tyr233 the chain carries Phosphotyrosine.

Belongs to the protein kinase superfamily. Ser/Thr protein kinase family.

Its subcellular location is the secreted. The catalysed reaction is L-seryl-[protein] + ATP = O-phospho-L-seryl-[protein] + ADP + H(+). It catalyses the reaction L-threonyl-[protein] + ATP = O-phospho-L-threonyl-[protein] + ADP + H(+). The chain is Serine/threonine-protein kinase-like protein At3g51990 from Arabidopsis thaliana (Mouse-ear cress).